A 512-amino-acid chain; its full sequence is Glutathione-binding protein GsiB (512 aa).

Residues Met1 to Ala26 form the signal peptide.

The protein belongs to the bacterial solute-binding protein 5 family. The complex is composed of two ATP-binding proteins (GsiA), two transmembrane proteins (GsiC and GsiD) and a solute-binding protein (GsiB).

The protein localises to the periplasm. Functionally, part of the ABC transporter complex GsiABCD involved in glutathione import. Binds glutathione. This Escherichia coli O6:K15:H31 (strain 536 / UPEC) protein is Glutathione-binding protein GsiB.